The following is a 433-amino-acid chain: MAKFDLTAKNCQYLDRHLTFPLLEFLLQKKVFDQTSLLKFILETVSKTNMVDYKHDIRERLAMDKVHPDELAQGRANVLATLKELQAEVAPLMKCMEELKNPDSTKDSKSVIHALQQTLDYDIILSAQKLAKYLYECGNYNDSLSYLYVCMLVMEPNDKNYLGVLWGKLAVEILTLNWQTALEDLTRLRDFIENYNFSPIQVLQQRAWLIHWSVLVFFNHGKGRDLIIDMFLYKPQYLNAIQTMCPHILRYLATAVIINRGRRNALKDLIKVIQQESYTYRDPITEFLEHLYVNFDFEGARKKLHECQTVIVNDFFIIGCLTEFVENARLMIFETFCRIHQCITIGMLADKLNMKPDEAECWIVNLIRNARLDAKIDSKLGHVVMGTQPLSPYQQLVEKIDSLSVRSEALTLLVERKHKAKTQEAGEGHWKYY.

The 174-residue stretch at 217–390 folds into the PCI domain; the sequence is FFNHGKGRDL…GHVVMGTQPL (174 aa).

The protein belongs to the eIF-3 subunit E family. Component of the eukaryotic translation initiation factor 3 (eIF-3) complex.

It is found in the cytoplasm. In terms of biological role, component of the eukaryotic translation initiation factor 3 (eIF-3) complex, which is involved in protein synthesis of a specialized repertoire of mRNAs and, together with other initiation factors, stimulates binding of mRNA and methionyl-tRNAi to the 40S ribosome. The eIF-3 complex specifically targets and initiates translation of a subset of mRNAs involved in cell proliferation. The protein is Eukaryotic translation initiation factor 3 subunit E (eIF3-S6) of Anopheles gambiae (African malaria mosquito).